Consider the following 229-residue polypeptide: Large ribosomal subunit protein uL1 (229 aa).

In terms of assembly, part of the 50S ribosomal subunit.

Directly binds to 23S rRNA. Forms what is known as the L1 stalk, which protrudes beyond the 70S ribosome surface. The stalk is preferentially stabilized in 70S versus 50S crystals. Interacts with the E site tRNA, blocking the exit path. This blockage implies that this section of the ribosome must be able to move to release the deacetylated tRNA. Functionally, protein L1 is also a translational repressor protein, it controls the translation of the L11 operon by binding to its mRNA. In Thermus thermophilus (strain ATCC 27634 / DSM 579 / HB8), this protein is Large ribosomal subunit protein uL1 (rplA).